We begin with the raw amino-acid sequence, 220 residues long: Protein Syd (220 aa).

The protein belongs to the Syd family.

Its subcellular location is the cell inner membrane. Its function is as follows. Interacts with the SecY protein in vivo. May bind preferentially to an uncomplexed state of SecY, thus functioning either as a chelating agent for excess SecY in the cell or as a regulatory factor that negatively controls the translocase function. The protein is Protein Syd of Shewanella loihica (strain ATCC BAA-1088 / PV-4).